The primary structure comprises 331 residues: tRNA uridine(34) hydroxylase (331 aa).

The region spanning 123 to 217 (TDPEVLLIDT…YLEDVPQEES (95 aa)) is the Rhodanese domain. Cysteine 177 functions as the Cysteine persulfide intermediate in the catalytic mechanism. Positions 293–331 (KSRGEEHIGSEAAKAIKKRQAEKKLKRKNYHQHLTQGAE) are disordered. Over residues 307–323 (AIKKRQAEKKLKRKNYH) the composition is skewed to basic residues.

Belongs to the TrhO family.

It carries out the reaction uridine(34) in tRNA + AH2 + O2 = 5-hydroxyuridine(34) in tRNA + A + H2O. In terms of biological role, catalyzes oxygen-dependent 5-hydroxyuridine (ho5U) modification at position 34 in tRNAs. This chain is tRNA uridine(34) hydroxylase, found in Hahella chejuensis (strain KCTC 2396).